The chain runs to 367 residues: 2,6-dihydropseudooxynicotine hydrolase (367 aa).

Residues Glu148, Ser217, Asp300, and His329 contribute to the active site.

This sequence belongs to the AB hydrolase superfamily. As to quaternary structure, homodimer.

It catalyses the reaction 2,6-dihydroxypseudooxynicotine + H2O = 2,6-dihydroxypyridine + 4-(methylamino)butanoate + H(+). It participates in alkaloid degradation; nicotine degradation; 2,6-dihydroxypyridine and 4-(methylamino)butanoate from 6-hydroxypseudooxynicotine: step 2/2. Its function is as follows. L-nicotine is used as a growth substrate. Plays a role in nicotine catabolism by cleaving a C-C bond in 2,6-dihydroxypseudooxynicotine. This chain is 2,6-dihydropseudooxynicotine hydrolase, found in Paenarthrobacter nicotinovorans (Arthrobacter nicotinovorans).